Reading from the N-terminus, the 191-residue chain is Thymidylate kinase (191 aa).

Residue 7–14 participates in ATP binding; it reads GVDGAGKS.

Belongs to the thymidylate kinase family.

The catalysed reaction is dTMP + ATP = dTDP + ADP. Its function is as follows. Phosphorylation of dTMP to form dTDP in both de novo and salvage pathways of dTTP synthesis. This chain is Thymidylate kinase (tmk), found in Helicobacter pylori (strain ATCC 700392 / 26695) (Campylobacter pylori).